The sequence spans 212 residues: Pyridoxine/pyridoxamine 5'-phosphate oxidase 1 (212 aa).

Substrate is bound by residues 8 to 11 and lysine 66; that span reads RTDY. FMN is bound by residues 61 to 66, 76 to 77, lysine 83, and glutamine 105; these read RIVLLK and FT. Substrate-binding residues include tyrosine 123, arginine 127, and serine 131. FMN-binding positions include 140 to 141 and tryptophan 184; that span reads QS. Substrate is bound at residue 190–192; it reads RLH. Arginine 194 lines the FMN pocket.

It belongs to the pyridoxamine 5'-phosphate oxidase family. As to quaternary structure, homodimer. The cofactor is FMN.

It carries out the reaction pyridoxamine 5'-phosphate + O2 + H2O = pyridoxal 5'-phosphate + H2O2 + NH4(+). The catalysed reaction is pyridoxine 5'-phosphate + O2 = pyridoxal 5'-phosphate + H2O2. The protein operates within cofactor metabolism; pyridoxal 5'-phosphate salvage; pyridoxal 5'-phosphate from pyridoxamine 5'-phosphate: step 1/1. It functions in the pathway cofactor metabolism; pyridoxal 5'-phosphate salvage; pyridoxal 5'-phosphate from pyridoxine 5'-phosphate: step 1/1. Its function is as follows. Catalyzes the oxidation of either pyridoxine 5'-phosphate (PNP) or pyridoxamine 5'-phosphate (PMP) into pyridoxal 5'-phosphate (PLP). The chain is Pyridoxine/pyridoxamine 5'-phosphate oxidase 1 from Ralstonia nicotianae (strain ATCC BAA-1114 / GMI1000) (Ralstonia solanacearum).